Reading from the N-terminus, the 539-residue chain is Chaperonin GroEL (539 aa).

Residues 29-32, 86-90, G412, 475-477, and D491 contribute to the ATP site; these read TLGP, DGTTT, and NAA.

It belongs to the chaperonin (HSP60) family. Forms a cylinder of 14 subunits composed of two heptameric rings stacked back-to-back. Interacts with the co-chaperonin GroES.

The protein resides in the cytoplasm. It catalyses the reaction ATP + H2O + a folded polypeptide = ADP + phosphate + an unfolded polypeptide.. Functionally, together with its co-chaperonin GroES, plays an essential role in assisting protein folding. The GroEL-GroES system forms a nano-cage that allows encapsulation of the non-native substrate proteins and provides a physical environment optimized to promote and accelerate protein folding. The chain is Chaperonin GroEL from Tsukamurella tyrosinosolvens.